Reading from the N-terminus, the 61-residue chain is EEKSGLYRKPSCGEMSAMHACPMNFAPVCGTDGNTYPNECSLCFQRQNTKTDILITKDDRC.

A Kazal-like domain is found at 6 to 61 (LYRKPSCGEMSAMHACPMNFAPVCGTDGNTYPNECSLCFQRQNTKTDILITKDDRC). Disulfide bonds link C12–C43, C21–C40, and C29–C61.

It is found in the secreted. In Anguilla anguilla (European freshwater eel), this protein is Probable pancreatic secretory proteinase inhibitor.